A 107-amino-acid chain; its full sequence is Small ribosomal subunit protein uS17 (107 aa).

The protein belongs to the universal ribosomal protein uS17 family. As to quaternary structure, part of the 30S ribosomal subunit.

One of the primary rRNA binding proteins, it binds specifically to the 5'-end of 16S ribosomal RNA. In Thermotoga maritima (strain ATCC 43589 / DSM 3109 / JCM 10099 / NBRC 100826 / MSB8), this protein is Small ribosomal subunit protein uS17.